Here is a 476-residue protein sequence, read N- to C-terminus: Bifunctional protein HldE (476 aa).

A ribokinase region spans residues 1 to 318; it reads MKVTLPDFRR…ENAIRGRAET (318 aa). 195 to 198 provides a ligand contact to ATP; the sequence is NLSE. Residue Asp-264 is part of the active site. Residues 344–476 are cytidylyltransferase; that stretch reads MTNGIFDILH…IIQSIKNGLG (133 aa).

The protein in the N-terminal section; belongs to the carbohydrate kinase PfkB family. In the C-terminal section; belongs to the cytidylyltransferase family. In terms of assembly, homodimer.

It catalyses the reaction D-glycero-beta-D-manno-heptose 7-phosphate + ATP = D-glycero-beta-D-manno-heptose 1,7-bisphosphate + ADP + H(+). The catalysed reaction is D-glycero-beta-D-manno-heptose 1-phosphate + ATP + H(+) = ADP-D-glycero-beta-D-manno-heptose + diphosphate. The protein operates within nucleotide-sugar biosynthesis; ADP-L-glycero-beta-D-manno-heptose biosynthesis; ADP-L-glycero-beta-D-manno-heptose from D-glycero-beta-D-manno-heptose 7-phosphate: step 1/4. It functions in the pathway nucleotide-sugar biosynthesis; ADP-L-glycero-beta-D-manno-heptose biosynthesis; ADP-L-glycero-beta-D-manno-heptose from D-glycero-beta-D-manno-heptose 7-phosphate: step 3/4. Its function is as follows. Catalyzes the phosphorylation of D-glycero-D-manno-heptose 7-phosphate at the C-1 position to selectively form D-glycero-beta-D-manno-heptose-1,7-bisphosphate. Catalyzes the ADP transfer from ATP to D-glycero-beta-D-manno-heptose 1-phosphate, yielding ADP-D-glycero-beta-D-manno-heptose. This is Bifunctional protein HldE from Yersinia enterocolitica serotype O:8 / biotype 1B (strain NCTC 13174 / 8081).